The primary structure comprises 762 residues: cGMP-dependent protein kinase 2 (762 aa).

The segment at 1–25 (MGNGSVKPKHSKHPDGQSGNLSNEA) is disordered. A lipid anchor (N-myristoyl glycine) is attached at glycine 2. A phosphoserine mark is found at serine 110 and serine 117. The interval 112 to 138 (LVSLHSRRGAKAGVSAEPTSRTYDLNK) is disordered. Residues 168 to 283 (FLKRLDPQQI…DEEYRNFLRS (116 aa)) are cGMP-binding, high affinity; cAMP-binding, moderate affinity. 3',5'-cyclic GMP is bound by residues 232–235 (GELA), 242–243 (RT), lysine 347, 356–359 (GEKA), 366–367 (RS), aspartate 412, and arginine 415. The cGMP-binding, high affinity; cAMP-binding, low affinity stretch occupies residues 286–416 (LLKNLPEDKL…TLNRDDEKRH (131 aa)). Serine 431 is modified (phosphoserine). In terms of domain architecture, Protein kinase spans 453 to 711 (LEIIATLGVG…INDIKKHRWL (259 aa)). ATP contacts are provided by residues 459–467 (LGVGGFGRV) and lysine 482. Aspartate 576 functions as the Proton acceptor in the catalytic mechanism. Threonine 609 carries the post-translational modification Phosphothreonine. Positions 712 to 762 (NGFNWEGLKARSLPSPLRRELSGPIDHSYFDKYPPEKGVPPDEMSGWDKDF) constitute an AGC-kinase C-terminal domain. Residues 740 to 762 (YFDKYPPEKGVPPDEMSGWDKDF) form a disordered region.

Belongs to the protein kinase superfamily. AGC Ser/Thr protein kinase family. cGMP subfamily. In terms of assembly, interacts with GRIA1/GLUR1. In terms of processing, myristoylation mediates membrane localization. Highly expressed in intestinal mucosa and is 20 times less abundant in brain and kidney. Expressed in jejunum, in the apical domain of the villus epithelium.

It localises to the apical cell membrane. The protein resides in the cell membrane. The catalysed reaction is L-seryl-[protein] + ATP = O-phospho-L-seryl-[protein] + ADP + H(+). It carries out the reaction L-threonyl-[protein] + ATP = O-phospho-L-threonyl-[protein] + ADP + H(+). Binding of cGMP results in enzyme activation. Crucial regulator of intestinal secretion and bone growth. Phosphorylates and activates CFTR on the plasma membrane. Plays a key role in intestinal secretion by regulating cGMP-dependent translocation of CFTR in jejunum. Acts downstream of NMDAR to activate the plasma membrane accumulation of GRIA1/GLUR1 in synapse and increase synaptic plasticity. Phosphorylates GRIA1/GLUR1 at Ser-863. Acts as regulator of gene expression and activator of the extracellular signal-regulated kinases MAPK3/ERK1 and MAPK1/ERK2 in mechanically stimulated osteoblasts. Under fluid shear stress, mediates ERK activation and subsequent induction of FOS, FOSL1/FRA1, FOSL2/FRA2 and FOSB that play a key role in the osteoblast anabolic response to mechanical stimulation. In Rattus norvegicus (Rat), this protein is cGMP-dependent protein kinase 2 (Prkg2).